A 454-amino-acid polypeptide reads, in one-letter code: Divalent metal cation transporter MntH (454 aa).

The tract at residues Met-1–Asp-21 is disordered. A run of 11 helical transmembrane segments spans residues Leu-45–Trp-65, Thr-78–Ala-98, Phe-122–Gly-142, Ile-153–Met-173, Ala-182–Ala-202, Ile-220–Pro-240, Ile-275–Phe-295, Leu-312–Ala-332, Gly-368–Gln-388, Leu-389–Val-409, and Gly-426–Leu-446.

It belongs to the NRAMP family.

The protein resides in the cell inner membrane. Its function is as follows. H(+)-stimulated, divalent metal cation uptake system. This is Divalent metal cation transporter MntH from Mesorhizobium japonicum (strain LMG 29417 / CECT 9101 / MAFF 303099) (Mesorhizobium loti (strain MAFF 303099)).